The primary structure comprises 562 residues: NAD-dependent malic enzyme (562 aa).

The Proton donor role is filled by tyrosine 101. Residue arginine 154 coordinates NAD(+). Lysine 172 serves as the catalytic Proton acceptor. Residues glutamate 243, aspartate 244, and aspartate 267 each coordinate a divalent metal cation. Positions 267 and 415 each coordinate NAD(+).

It belongs to the malic enzymes family. Homotetramer. Mg(2+) is required as a cofactor. The cofactor is Mn(2+).

It carries out the reaction (S)-malate + NAD(+) = pyruvate + CO2 + NADH. The enzyme catalyses oxaloacetate + H(+) = pyruvate + CO2. The protein is NAD-dependent malic enzyme of Shewanella halifaxensis (strain HAW-EB4).